Here is a 208-residue protein sequence, read N- to C-terminus: Thymidylate kinase (208 aa).

10–17 (GLEGAGKT) is an ATP binding site.

It belongs to the thymidylate kinase family.

The catalysed reaction is dTMP + ATP = dTDP + ADP. Its function is as follows. Phosphorylation of dTMP to form dTDP in both de novo and salvage pathways of dTTP synthesis. The protein is Thymidylate kinase of Actinobacillus pleuropneumoniae serotype 5b (strain L20).